The following is a 25-amino-acid chain: Pancreatic triacylglycerol lipase (25 aa).

Cysteine 4 and cysteine 10 are oxidised to a cystine.

It belongs to the AB hydrolase superfamily. Lipase family. Forms a 1:1 stoichiometric complex with (pro)colipase/CLPS.

The protein resides in the secreted. It catalyses the reaction a triacylglycerol + H2O = a diacylglycerol + a fatty acid + H(+). The catalysed reaction is 1,2,3-tributanoylglycerol + H2O = dibutanoylglycerol + butanoate + H(+). It carries out the reaction 1,2,3-tri-(9Z-octadecenoyl)-glycerol + H2O = di-(9Z)-octadecenoylglycerol + (9Z)-octadecenoate + H(+). The enzyme catalyses all-trans-retinyl hexadecanoate + H2O = all-trans-retinol + hexadecanoate + H(+). It catalyses the reaction 1,2-di-(9Z-octadecenoyl)-glycerol + H2O = (9Z-octadecenoyl)-glycerol + (9Z)-octadecenoate + H(+). With respect to regulation, inhibited by bile salts, is reactivated by (pro)colipase/CLPS. In terms of biological role, plays an important role in fat metabolism. It preferentially splits the esters of long-chain fatty acids at positions 1 and 3, producing mainly 2-monoacylglycerol and free fatty acids, and shows considerably higher activity against insoluble emulsified substrates than against soluble ones. In Felis catus (Cat), this protein is Pancreatic triacylglycerol lipase (PNLIP).